Consider the following 185-residue polypeptide: Elongation factor P (185 aa).

This sequence belongs to the elongation factor P family.

The protein localises to the cytoplasm. The protein operates within protein biosynthesis; polypeptide chain elongation. Involved in peptide bond synthesis. Stimulates efficient translation and peptide-bond synthesis on native or reconstituted 70S ribosomes in vitro. Probably functions indirectly by altering the affinity of the ribosome for aminoacyl-tRNA, thus increasing their reactivity as acceptors for peptidyl transferase. This Deinococcus geothermalis (strain DSM 11300 / CIP 105573 / AG-3a) protein is Elongation factor P.